Consider the following 406-residue polypeptide: Putative Bro-N domain-containing protein 019R (406 aa).

Positions 4 to 138 (LINLKQSREY…QILPSIRKYG (135 aa)) constitute a Bro-N domain. 2 coiled-coil regions span residues 141–177 (QLEMQLTQAMEQLSIKERDVQEAHEARIKAERKAVRV) and 343–372 (DSINEKVKQNLEEIVIERKELISKLADKTN).

This sequence belongs to the IIV-6 201R/289L family.

The sequence is that of Putative Bro-N domain-containing protein 019R from Invertebrate iridescent virus 3 (IIV-3).